A 506-amino-acid chain; its full sequence is CDK5 regulatory subunit-associated protein 3 (506 aa).

Short sequence motifs (shuffled ATG8-binding motif) lie at residues 267-270, 292-295, and 310-313; these read IDWG. The interval 269–506 is required for interaction with UFL1 and mediates interaction with CHEK1; that stretch reads WGDFGVEAVS…RPVNLMGTSL (238 aa). Residues 355–370 form an RPL10a-binding domain (RBD) region; it reads DELMELEIFLARRAVE. A Glycyl lysine isopeptide (Lys-Gly) (interchain with G-Cter in SUMO2) cross-link involves residue Lys-450.

The protein belongs to the CDK5RAP3 family. In terms of assembly, substrate adapter component of the UFM1 ribosome E3 ligase (UREL) complex, composed of UFL1, DDRGK1 and CDK5RAP3. Interaction with UFL1 anchors CDK5RAP3 in the cytoplasm, preventing its translocation to the nucleus which allows expression of the CCND1 cyclin and progression of cells through the G1/S transition. Interacts with ATG8 family proteins MAP1LC3A, MAP1LC3B, GABARAP, GABARAPL1 and GABARAPL2. Interacts with CDK5R1; competes with CDK5RAP1 and CDK5RAP2. Interacts with RELA. Interacts with CHEK1; may negatively regulate CHEK1 and thereby stimulate entry into mitosis. Interacts with CDKN2A/ARF and MDM2; forms a ternary complex involved in regulation of p53/TP53. Interacts with MAPK14. Interacts with CCNB1. Interacts with TUBG1; may regulate CDK5RAP3 in mitotic G2/M transition checkpoint. May be phosphorylated by CDK5. In terms of processing, ubiquitinated. Probably triggers proteasomal degradation and is negatively regulated by UFL1. Post-translationally, may be ufmylated. Cleaved by caspases early during apoptosis, the resulting peptides may play a role in rupture of the nuclear envelope.

The protein resides in the endoplasmic reticulum membrane. It localises to the cytoplasm. It is found in the nucleus. The protein localises to the cytoskeleton. Its subcellular location is the microtubule organizing center. The protein resides in the centrosome. In terms of biological role, substrate adapter of E3 ligase complexes mediating ufmylation, the covalent attachment of the ubiquitin-like modifier UFM1 to substrate proteins, and which is involved in various processes, such as ribosome recycling and reticulophagy (also called ER-phagy). As part of the UREL complex, plays a key role in ribosome recycling by promoting mono-ufmylation of RPL26/uL24 subunit of the 60S ribosome. Ufmylation of RPL26/uL24 occurs on free 60S ribosomes following ribosome dissociation: it weakens the junction between post-termination 60S subunits and SEC61 translocons, promoting release and recycling of the large ribosomal subunit from the endoplasmic reticulum membrane. Ufmylation of RPL26/uL24 and subsequent 60S ribosome recycling either take place after normal termination of translation or after ribosome stalling during cotranslational translocation at the endoplasmic reticulum. Within the UREL complex, CDK5RAP3 acts as a substrate adapter that constrains UFL1 ligase activity to mono-ufmylate RPL26/uL24 at 'Lys-134'. The UREL complex is also involved in reticulophagy in response to endoplasmic reticulum stress by promoting ufmylation of proteins such as CYB5R3, thereby promoting lysosomal degradation of ufmylated proteins. Also acts as a regulator of transcription: negatively regulates NF-kappa-B-mediated gene transcription through the control of RELA phosphorylation. Also regulates mitotic G2/M transition checkpoint and mitotic G2 DNA damage checkpoint. Through its interaction with CDKN2A/ARF and MDM2 may induce MDM2-dependent p53/TP53 ubiquitination, stabilization and activation in the nucleus, thereby promoting G1 cell cycle arrest and inhibition of cell proliferation. May also play a role in the rupture of the nuclear envelope during apoptosis. May regulate MAPK14 activity by regulating its dephosphorylation by PPM1D/WIP1. Required for liver development. This is CDK5 regulatory subunit-associated protein 3 from Pongo abelii (Sumatran orangutan).